The chain runs to 271 residues: 3-methyl-2-oxobutanoate hydroxymethyltransferase (271 aa).

Mg(2+)-binding residues include aspartate 53 and aspartate 92. 3-methyl-2-oxobutanoate is bound by residues 53–54 (DS), aspartate 92, and lysine 120. Glutamate 122 contributes to the Mg(2+) binding site. Glutamate 189 (proton acceptor) is an active-site residue.

Belongs to the PanB family. In terms of assembly, homodecamer; pentamer of dimers. Requires Mg(2+) as cofactor.

The protein resides in the cytoplasm. It catalyses the reaction 3-methyl-2-oxobutanoate + (6R)-5,10-methylene-5,6,7,8-tetrahydrofolate + H2O = 2-dehydropantoate + (6S)-5,6,7,8-tetrahydrofolate. Its pathway is cofactor biosynthesis; (R)-pantothenate biosynthesis; (R)-pantoate from 3-methyl-2-oxobutanoate: step 1/2. Its function is as follows. Catalyzes the reversible reaction in which hydroxymethyl group from 5,10-methylenetetrahydrofolate is transferred onto alpha-ketoisovalerate to form ketopantoate. This is 3-methyl-2-oxobutanoate hydroxymethyltransferase from Burkholderia thailandensis (strain ATCC 700388 / DSM 13276 / CCUG 48851 / CIP 106301 / E264).